A 526-amino-acid chain; its full sequence is MDPNSIEIELSDDDRVISFHANRQNLINISEYFKILLTKFNLHDKQQIPIKVPNAFVAYDIIVELTENTESNVGNLPVWEHYLEKLKFMDYVGLSAKMIRSIDTTNIVVPKSNFESLIKLYEQLGYNSSLIPLIKNSFQKDNTNILIEPHVAKKLLNVSESKIIHAGYTRGGLHVINYCDYIDRKIIHTFDKHNDFISFLSYSKWNHDASMEQYINSIAISPNKKYIALATTCGLIIYNLIDKTHHDTIQTNQNINFVDFNYSSTNIFYRKRKWIGANGSNKVGIYNLETSKEISIGIDNLRNYHSKLSSTGTDLCILSKNLLVMCDNFNRIVVINYALDKIIKILDSCIYLKNNDNTNTVFLFPSSNKKYLGHLIVNYKKIYVQKSDTYTLFVYYIDSKRQDLQYVIEYTGSAPVHIDISNKLVVIGDCTGFFSIYKYKSGKIVFRNKIKSHNSCVTSIAISSNNKMILTAGLDGLLKLWNSKTLNLIDSYYHGCEYVDFISFTSEFGLDFDNFLRKSISNKSIQ.

WD repeat units follow at residues 210 to 248 and 452 to 491; these read SMEQ…HHDT and SHNS…LIDS.

This is an uncharacterized protein from Acanthamoeba polyphaga mimivirus (APMV).